The chain runs to 198 residues: Glycerol-3-phosphate acyltransferase (198 aa).

A run of 6 helical transmembrane segments spans residues 1-21 (MHIL…GFLF), 50-70 (WPAF…VKIA), 77-97 (NLFE…PIWL), 111-131 (MFIA…LIIL), 136-156 (IVSL…FLDI), and 157-177 (GSTN…VIWK).

Belongs to the PlsY family. In terms of assembly, probably interacts with PlsX.

It is found in the cell inner membrane. It carries out the reaction an acyl phosphate + sn-glycerol 3-phosphate = a 1-acyl-sn-glycero-3-phosphate + phosphate. Its pathway is lipid metabolism; phospholipid metabolism. Functionally, catalyzes the transfer of an acyl group from acyl-phosphate (acyl-PO(4)) to glycerol-3-phosphate (G3P) to form lysophosphatidic acid (LPA). This enzyme utilizes acyl-phosphate as fatty acyl donor, but not acyl-CoA or acyl-ACP. The chain is Glycerol-3-phosphate acyltransferase from Prochlorococcus marinus subsp. pastoris (strain CCMP1986 / NIES-2087 / MED4).